We begin with the raw amino-acid sequence, 70 residues long: Cuticle protein 16 isoform b (70 aa).

In Limulus polyphemus (Atlantic horseshoe crab), this protein is Cuticle protein 16 isoform b.